A 124-amino-acid polypeptide reads, in one-letter code: Small ribosomal subunit protein uS12 (124 aa).

Residue aspartate 89 is modified to 3-methylthioaspartic acid. Residues 105-124 (TGVDSRMQGRSKYGTKKPKK) are disordered.

This sequence belongs to the universal ribosomal protein uS12 family. In terms of assembly, part of the 30S ribosomal subunit. Contacts proteins S8 and S17. May interact with IF1 in the 30S initiation complex.

In terms of biological role, with S4 and S5 plays an important role in translational accuracy. Its function is as follows. Interacts with and stabilizes bases of the 16S rRNA that are involved in tRNA selection in the A site and with the mRNA backbone. Located at the interface of the 30S and 50S subunits, it traverses the body of the 30S subunit contacting proteins on the other side and probably holding the rRNA structure together. The combined cluster of proteins S8, S12 and S17 appears to hold together the shoulder and platform of the 30S subunit. This is Small ribosomal subunit protein uS12 from Vesicomyosocius okutanii subsp. Calyptogena okutanii (strain HA).